We begin with the raw amino-acid sequence, 198 residues long: Probable chorismate pyruvate-lyase (198 aa).

Residues R73, L111, and E172 each coordinate substrate.

It belongs to the UbiC family.

It is found in the cytoplasm. It carries out the reaction chorismate = 4-hydroxybenzoate + pyruvate. The protein operates within cofactor biosynthesis; ubiquinone biosynthesis. Removes the pyruvyl group from chorismate, with concomitant aromatization of the ring, to provide 4-hydroxybenzoate (4HB) for the ubiquinone pathway. In Burkholderia lata (strain ATCC 17760 / DSM 23089 / LMG 22485 / NCIMB 9086 / R18194 / 383), this protein is Probable chorismate pyruvate-lyase.